The following is a 1461-amino-acid chain: Phospholipid-transporting ATPase VB (1461 aa).

Over Met1 to Leu82 the chain is Cytoplasmic. The helical transmembrane segment at Pro83 to Leu104 threads the bilayer. Topologically, residues Asn105 to Met110 are exoplasmic loop. A helical membrane pass occupies residues Glu111–Lys132. Topologically, residues Asp133–Asp316 are cytoplasmic. Residues Ile317 to Trp338 form a helical membrane-spanning segment. Over Asn339–Phe368 the chain is Exoplasmic loop. Residues Leu369 to Val390 traverse the membrane as a helical segment. Topologically, residues Lys391–Arg1111 are cytoplasmic. Asp433 acts as the 4-aspartylphosphate intermediate in catalysis. 3 residues coordinate ATP: Asp433, Lys434, and Thr435. Residue Asp433 participates in Mg(2+) binding. Thr435 is a binding site for Mg(2+). 2 stretches are compositionally biased toward polar residues: residues Met496–Ala511 and Ser530–Ser539. Disordered regions lie at residues Met496–Glu541 and Thr640–Gln687. 9 residues coordinate ATP: Glu724, Phe766, Lys790, Arg835, Thr915, Gly916, Asp917, Arg1029, and Lys1035. Residue Asp1055 participates in Mg(2+) binding. The ATP site is built by Asn1058 and Asp1059. Residue Asp1059 coordinates Mg(2+). A helical membrane pass occupies residues Met1112–Phe1132. Over Phe1133–Tyr1144 the chain is Exoplasmic loop. Residues Trp1145–Val1164 form a helical membrane-spanning segment. Over Leu1165 to Thr1194 the chain is Cytoplasmic. A helical transmembrane segment spans residues Phe1195–Ala1216. The Exoplasmic loop portion of the chain corresponds to Tyr1217 to Asp1223. A helical membrane pass occupies residues Val1224 to Glu1246. At Met1247–Ile1252 the chain is on the cytoplasmic side. Residues Phe1253–Asn1273 traverse the membrane as a helical segment. Residues Ala1274–Gly1291 are Exoplasmic loop-facing. The chain crosses the membrane as a helical span at residues Gln1292 to Phe1316. Over Leu1317–Ile1461 the chain is Cytoplasmic. The disordered stretch occupies residues Ile1346 to Val1397. Polar residues predominate over residues Pro1368–Pro1387.

Belongs to the cation transport ATPase (P-type) (TC 3.A.3) family. Type IV subfamily. In terms of assembly, component of a P4-ATPase flippase complex which consists of a catalytic alpha subunit ATP10B and an accessory beta subunit TMEM30A. Requires Mg(2+) as cofactor. Post-translationally, autophosphorylated at the conserved aspartate of the P-type ATPase signature sequence. In terms of tissue distribution, expressed in predominantly in brain structures including medulla oblongata, substantia nigra and basal ganglia. Expressed in the gastrointestinal system with highest levels in the small intestine and colon. Also expressed at low levels in testis and thymus.

It is found in the late endosome membrane. The protein localises to the lysosome membrane. Its subcellular location is the endoplasmic reticulum membrane. It catalyses the reaction ATP + H2O + phospholipidSide 1 = ADP + phosphate + phospholipidSide 2.. The enzyme catalyses a beta-D-glucosyl-(1&lt;-&gt;1')-N-acylsphing-4-enine(out) + ATP + H2O = a beta-D-glucosyl-(1&lt;-&gt;1')-N-acylsphing-4-enine(in) + ADP + phosphate + H(+). Functionally, catalytic component of a P4-ATPase flippase complex, which catalyzes the hydrolysis of ATP coupled to the transport of glucosylceramide (GlcCer) from the outer to the inner leaflet of lysosome membranes. Plays an important role in the maintenance of lysosome membrane integrity and function in cortical neurons. The sequence is that of Phospholipid-transporting ATPase VB from Homo sapiens (Human).